The following is a 157-amino-acid chain: Alpha-amylase/trypsin inhibitor RA16 (157 aa).

The signal sequence occupies residues 1 to 26 (MASNKVVISALLVVVVSVLAATTTMA). Intrachain disulfides connect Cys-41–Cys-89, Cys-55–Cys-77, Cys-63–Cys-121, Cys-78–Cys-137, and Cys-91–Cys-149.

The protein belongs to the cereal trypsin/alpha-amylase inhibitor family. Five disulfide bonds are present.

Its subcellular location is the secreted. Seed storage protein. This is Alpha-amylase/trypsin inhibitor RA16 from Oryza sativa subsp. japonica (Rice).